The primary structure comprises 436 residues: Cysteine--tRNA ligase (436 aa).

Residue C24 coordinates Zn(2+). Residues 26–36 carry the 'HIGH' region motif; the sequence is PTVYNHIHIGN. Positions 202, 227, and 231 each coordinate Zn(2+). The 'KMSKS' region motif lies at 259–263; the sequence is KMSKS. K262 provides a ligand contact to ATP.

It belongs to the class-I aminoacyl-tRNA synthetase family. As to quaternary structure, monomer. Zn(2+) serves as cofactor.

It is found in the cytoplasm. It carries out the reaction tRNA(Cys) + L-cysteine + ATP = L-cysteinyl-tRNA(Cys) + AMP + diphosphate. The polypeptide is Cysteine--tRNA ligase (Ureaplasma parvum serovar 3 (strain ATCC 700970)).